Reading from the N-terminus, the 445-residue chain is Amino-acid acetyltransferase (445 aa).

The region spanning 299 to 438 (EQVRQAQIDD…QGLYNYQRNS (140 aa)) is the N-acetyltransferase domain.

This sequence belongs to the acetyltransferase family. ArgA subfamily.

Its subcellular location is the cytoplasm. The catalysed reaction is L-glutamate + acetyl-CoA = N-acetyl-L-glutamate + CoA + H(+). It functions in the pathway amino-acid biosynthesis; L-arginine biosynthesis; N(2)-acetyl-L-ornithine from L-glutamate: step 1/4. The protein is Amino-acid acetyltransferase of Vibrio atlanticus (strain LGP32) (Vibrio splendidus (strain Mel32)).